We begin with the raw amino-acid sequence, 199 residues long: MAEEQVLNTHNASILLSAANKSHYPQDDLPEIALAGRSNVGKSSFINTILGRKNLARTSSKPGKTQLLNFFNIDDKLRFVDVPGYGYAKVSKSERAKWGKMIEEYLTTRDNLRAVVSLVDLRHAPSKEDIQMYDFLKYYDIPVIVVATKADKIPRGKWNKHESVVKKALNFDKSDTFIVFSSVERIGIDDSWDAILEQV.

An EngB-type G domain is found at 28–199 (DLPEIALAGR…DSWDAILEQV (172 aa)). GTP contacts are provided by residues 36 to 43 (GRSNVGKS), 63 to 67 (GKTQL), 81 to 84 (DVPG), 148 to 151 (TKAD), and 180 to 182 (FSS). Mg(2+) contacts are provided by S43 and T65.

This sequence belongs to the TRAFAC class TrmE-Era-EngA-EngB-Septin-like GTPase superfamily. EngB GTPase family. Mg(2+) serves as cofactor.

Functionally, necessary for normal cell division and for the maintenance of normal septation. The polypeptide is Probable GTP-binding protein EngB (Streptococcus pyogenes serotype M49 (strain NZ131)).